The primary structure comprises 156 residues: Ribosomal RNA large subunit methyltransferase H (156 aa).

S-adenosyl-L-methionine is bound by residues Leu-73, Gly-104, and 123-128 (IGPLTL).

It belongs to the RNA methyltransferase RlmH family. As to quaternary structure, homodimer.

Its subcellular location is the cytoplasm. It carries out the reaction pseudouridine(1915) in 23S rRNA + S-adenosyl-L-methionine = N(3)-methylpseudouridine(1915) in 23S rRNA + S-adenosyl-L-homocysteine + H(+). Specifically methylates the pseudouridine at position 1915 (m3Psi1915) in 23S rRNA. The polypeptide is Ribosomal RNA large subunit methyltransferase H (Xanthomonas euvesicatoria pv. vesicatoria (strain 85-10) (Xanthomonas campestris pv. vesicatoria)).